The primary structure comprises 180 residues: Pyruvate synthase subunit PorC (180 aa).

In terms of assembly, heterotetramer of one alpha, one beta, one delta and one gamma chain.

The catalysed reaction is 2 oxidized [2Fe-2S]-[ferredoxin] + pyruvate + CoA = 2 reduced [2Fe-2S]-[ferredoxin] + acetyl-CoA + CO2 + H(+). The sequence is that of Pyruvate synthase subunit PorC (porC) from Methanothermobacter thermautotrophicus (strain ATCC 29096 / DSM 1053 / JCM 10044 / NBRC 100330 / Delta H) (Methanobacterium thermoautotrophicum).